The sequence spans 620 residues: Long-chain fatty acid transport protein 2 (620 aa).

Residues 1-4 (MLPV) are Lumenal-facing. Residues 5-27 (LYTGLAGLLLLPLLLTCCCPYLL) traverse the membrane as a helical segment. Residues 28 to 106 (QDVRFFLQLA…DHLGLRQGDC (79 aa)) lie on the Cytoplasmic side of the membrane. A helical transmembrane segment spans residues 107–127 (VALFMGNEPAYVWLWLGLLKL). Over 128–267 (GCPMACLNYN…DVIYTTMPLY (140 aa)) the chain is Lumenal. 222 to 233 (YIYTSGTTGLPK) lines the AMP pocket. The chain crosses the membrane as a helical span at residues 268–288 (HSAALMIGLHGCIVVGATFAL). Residues 289–620 (RSKFSASQFW…NAIIDKTLKL (332 aa)) are Cytoplasmic-facing. Lys-291 bears the N6-acetyllysine mark. Residue Thr-577 is modified to Phosphothreonine.

This sequence belongs to the ATP-dependent AMP-binding enzyme family. In terms of tissue distribution, liver and kidney (at protein level).

It localises to the endoplasmic reticulum membrane. The protein localises to the peroxisome membrane. Its subcellular location is the cell membrane. It is found in the microsome. It carries out the reaction a fatty acid(in) = a fatty acid(out). It catalyses the reaction (9Z)-octadecenoate(out) = (9Z)-octadecenoate(in). The catalysed reaction is a long-chain fatty acid + ATP + CoA = a long-chain fatty acyl-CoA + AMP + diphosphate. The enzyme catalyses (5Z,8Z,11Z,14Z)-eicosatetraenoate + ATP + CoA = (5Z,8Z,11Z,14Z)-eicosatetraenoyl-CoA + AMP + diphosphate. It carries out the reaction (9Z,12Z,15Z)-octadecatrienoate + ATP + CoA = (9Z,12Z,15Z)-octadecatrienoyl-CoA + AMP + diphosphate. It catalyses the reaction hexadecanoate + ATP + CoA = hexadecanoyl-CoA + AMP + diphosphate. The catalysed reaction is (9Z)-octadecenoate + ATP + CoA = (9Z)-octadecenoyl-CoA + AMP + diphosphate. The enzyme catalyses 2,6,10,14-tetramethylpentadecanoate + ATP + CoA = pristanoyl-CoA + AMP + diphosphate. It carries out the reaction (E)-hexadec-2-enoate + ATP + CoA = (2E)-hexadecenoyl-CoA + AMP + diphosphate. It catalyses the reaction 3,7,11,15-tetramethylhexadecanoate + ATP + CoA = phytanoyl-CoA + AMP + diphosphate. The catalysed reaction is a very long-chain fatty acid + ATP + CoA = a very long-chain fatty acyl-CoA + AMP + diphosphate. The enzyme catalyses tetracosanoate + ATP + CoA = tetracosanoyl-CoA + AMP + diphosphate. It carries out the reaction (4Z,7Z,10Z,13Z,16Z,19Z)-docosahexaenoate + ATP + CoA = (4Z,7Z,10Z,13Z,16Z,19Z)-docosahexaenoyl-CoA + AMP + diphosphate. It catalyses the reaction (25R)-3alpha,7alpha,12alpha-trihydroxy-5beta-cholestan-26-oate + ATP + CoA = (25R)-3alpha,7alpha,12alpha-trihydroxy-5beta-cholestan-26-oyl-CoA + AMP + diphosphate. Functionally, mediates the import of long-chain fatty acids (LCFA) into the cell by facilitating their transport across cell membranes, playing an important role in hepatic fatty acid uptake. Also functions as an acyl-CoA ligase catalyzing the ATP-dependent formation of fatty acyl-CoA using LCFA and very-long-chain fatty acids (VLCFA) as substrates, which prevents fatty acid efflux from cells and might drive more fatty acid uptake. Plays a pivotal role in regulating available LCFA substrates from exogenous sources in tissues undergoing high levels of beta-oxidation or triglyceride synthesis. Can also activate branched-chain fatty acids such as phytanic acid and pristanic acid. May contribute to the synthesis of sphingosine-1-phosphate. Does not activate C24 bile acids, cholate and chenodeoxycholate. In vitro, activates 3-alpha,7-alpha,12-alpha-trihydroxy-5-beta-cholestanate (THCA), the C27 precursor of cholic acid deriving from the de novo synthesis from cholesterol. However, it is not critical for THCA activation and bile synthesis in vivo. In Rattus norvegicus (Rat), this protein is Long-chain fatty acid transport protein 2 (Slc27a2).